The chain runs to 135 residues: MKPSERRKARRLAVQAIYSWQLSGNNIADVEHEFLTEQNVDGVDIAYFRELLGGVATKKSQLDELITPFLVRPMDEVDPVEKAIVRLAAYELTFRKDVPYKVAINEAIELAKAFGAEDGHKFVNGILDKLVARTK.

The protein belongs to the NusB family.

In terms of biological role, involved in transcription antitermination. Required for transcription of ribosomal RNA (rRNA) genes. Binds specifically to the boxA antiterminator sequence of the ribosomal RNA (rrn) operons. In Shewanella piezotolerans (strain WP3 / JCM 13877), this protein is Transcription antitermination protein NusB.